The primary structure comprises 597 residues: Lysine--tRNA ligase (597 aa).

Residues glutamate 501 and glutamate 508 each coordinate Mg(2+).

This sequence belongs to the class-II aminoacyl-tRNA synthetase family. In terms of assembly, homodimer. The cofactor is Mg(2+).

It localises to the cytoplasm. The enzyme catalyses tRNA(Lys) + L-lysine + ATP = L-lysyl-tRNA(Lys) + AMP + diphosphate. This Aquifex aeolicus (strain VF5) protein is Lysine--tRNA ligase (lysS).